Consider the following 602-residue polypeptide: Auxin response factor 18 (602 aa).

The TF-B3 DNA-binding region spans 128–230 (FVKILTASDT…DLRVGVRRLA (103 aa)). The tract at residues 359 to 396 (TSPISTPAQQPQSKCKRSRPIEPSVKTPAPPSFLYSLP) is disordered. Over residues 360 to 371 (SPISTPAQQPQS) the composition is skewed to polar residues. The PB1 domain maps to 489–581 (RSRTKVQMQG…EVKKMTTKLK (93 aa)).

It belongs to the ARF family. As to quaternary structure, homodimers and heterodimers.

It localises to the nucleus. In terms of biological role, auxin response factors (ARFs) are transcriptional factors that bind specifically to the DNA sequence 5'-TGTCTC-3' found in the auxin-responsive promoter elements (AuxREs). Could act as transcriptional activator or repressor. Formation of heterodimers with Aux/IAA proteins may alter their ability to modulate early auxin response genes expression. The protein is Auxin response factor 18 (ARF18) of Arabidopsis thaliana (Mouse-ear cress).